Consider the following 1828-residue polypeptide: Dedicator of cytokinesis protein 2 (1828 aa).

One can recognise an SH3 domain in the interval Asp-8–Val-69. Lys-304 is modified (N6-acetyllysine). The 185-residue stretch at Arg-423–Cys-607 folds into the C2 DOCK-type domain. Residues Ser-588 and Ser-593 each carry the phosphoserine modification. Position 738 is an N6-acetyllysine (Lys-738). In terms of domain architecture, DOCKER spans Tyr-1210 to Met-1621. The segment at Ser-1652–Ser-1703 is disordered. Phosphoserine occurs at positions 1683, 1704, 1729, and 1782.

This sequence belongs to the DOCK family. As to quaternary structure, homodimer. Interacts with RAC1 and RAC2. Interacts with CRKL and VAV. Interacts with CD3Z. In terms of tissue distribution, specifically expressed in hematopoietic cells.

The protein resides in the endomembrane system. Its subcellular location is the cytoplasm. It localises to the cytoskeleton. In terms of biological role, involved in cytoskeletal rearrangements required for lymphocyte migration in response of chemokines. Activates RAC1 and RAC2, but not CDC42, by functioning as a guanine nucleotide exchange factor (GEF), which exchanges bound GDP for free GTP. May also participate in IL2 transcriptional activation via the activation of RAC2. This chain is Dedicator of cytokinesis protein 2 (Dock2), found in Mus musculus (Mouse).